Reading from the N-terminus, the 356-residue chain is Phosphoribosylformylglycinamidine cyclo-ligase (356 aa).

The protein belongs to the AIR synthase family.

Its subcellular location is the cytoplasm. It catalyses the reaction 2-formamido-N(1)-(5-O-phospho-beta-D-ribosyl)acetamidine + ATP = 5-amino-1-(5-phospho-beta-D-ribosyl)imidazole + ADP + phosphate + H(+). Its pathway is purine metabolism; IMP biosynthesis via de novo pathway; 5-amino-1-(5-phospho-D-ribosyl)imidazole from N(2)-formyl-N(1)-(5-phospho-D-ribosyl)glycinamide: step 2/2. This is Phosphoribosylformylglycinamidine cyclo-ligase from Rhizobium meliloti (strain 1021) (Ensifer meliloti).